Reading from the N-terminus, the 100-residue chain is Large ribosomal subunit protein bL27 (100 aa).

The propeptide occupies 1-13 (MNKLYWLTDLQLF). Residues 17-39 (KGVGSSKNGRDSNPKYLGAKLGD) form a disordered region.

This sequence belongs to the bacterial ribosomal protein bL27 family. Post-translationally, the N-terminus is cleaved by ribosomal processing cysteine protease Prp.

This chain is Large ribosomal subunit protein bL27, found in Ureaplasma parvum serovar 3 (strain ATCC 700970).